A 425-amino-acid polypeptide reads, in one-letter code: 3-isopropylmalate dehydratase large subunit (425 aa).

Residues cysteine 306, cysteine 366, and cysteine 369 each coordinate [4Fe-4S] cluster.

Belongs to the aconitase/IPM isomerase family. LeuC type 2 subfamily. Heterodimer of LeuC and LeuD. Requires [4Fe-4S] cluster as cofactor.

The enzyme catalyses (2R,3S)-3-isopropylmalate = (2S)-2-isopropylmalate. The protein operates within amino-acid biosynthesis; L-leucine biosynthesis; L-leucine from 3-methyl-2-oxobutanoate: step 2/4. Its function is as follows. Catalyzes the isomerization between 2-isopropylmalate and 3-isopropylmalate, via the formation of 2-isopropylmaleate. The chain is 3-isopropylmalate dehydratase large subunit from Nautilia profundicola (strain ATCC BAA-1463 / DSM 18972 / AmH).